We begin with the raw amino-acid sequence, 316 residues long: Ribosomal RNA small subunit methyltransferase H (316 aa).

S-adenosyl-L-methionine-binding positions include 35–37 (GGH), Asp55, Phe79, Asp101, and Gln108.

The protein belongs to the methyltransferase superfamily. RsmH family.

It localises to the cytoplasm. It catalyses the reaction cytidine(1402) in 16S rRNA + S-adenosyl-L-methionine = N(4)-methylcytidine(1402) in 16S rRNA + S-adenosyl-L-homocysteine + H(+). Its function is as follows. Specifically methylates the N4 position of cytidine in position 1402 (C1402) of 16S rRNA. This is Ribosomal RNA small subunit methyltransferase H from Vibrio campbellii (strain ATCC BAA-1116).